The following is an 81-amino-acid chain: Small ribosomal subunit protein bS16 (81 aa).

The protein belongs to the bacterial ribosomal protein bS16 family.

This Neisseria gonorrhoeae (strain ATCC 700825 / FA 1090) protein is Small ribosomal subunit protein bS16.